A 267-amino-acid polypeptide reads, in one-letter code: Cilia- and flagella-associated protein 300 (267 aa).

The protein belongs to the CFAP300 family. In terms of assembly, interacts with DNAAF2.

The protein localises to the cytoplasm. The protein resides in the cytoskeleton. Its subcellular location is the cilium axoneme. In terms of biological role, cilium- and flagellum-specific protein that plays a role in axonemal structure organization and motility. May play a role in outer and inner dynein arm assembly. This chain is Cilia- and flagella-associated protein 300, found in Rattus norvegicus (Rat).